A 549-amino-acid chain; its full sequence is Dihydroxy-acid dehydratase (549 aa).

Asp78 lines the Mg(2+) pocket. Residue Cys119 participates in [2Fe-2S] cluster binding. Mg(2+) contacts are provided by Asp120 and Lys121. Lys121 is modified (N6-carboxylysine). Cys191 provides a ligand contact to [2Fe-2S] cluster. Glu441 serves as a coordination point for Mg(2+). Ser466 acts as the Proton acceptor in catalysis.

The protein belongs to the IlvD/Edd family. As to quaternary structure, homodimer. [2Fe-2S] cluster serves as cofactor. It depends on Mg(2+) as a cofactor.

It catalyses the reaction (2R)-2,3-dihydroxy-3-methylbutanoate = 3-methyl-2-oxobutanoate + H2O. The catalysed reaction is (2R,3R)-2,3-dihydroxy-3-methylpentanoate = (S)-3-methyl-2-oxopentanoate + H2O. The protein operates within amino-acid biosynthesis; L-isoleucine biosynthesis; L-isoleucine from 2-oxobutanoate: step 3/4. It participates in amino-acid biosynthesis; L-valine biosynthesis; L-valine from pyruvate: step 3/4. Its function is as follows. Functions in the biosynthesis of branched-chain amino acids. Catalyzes the dehydration of (2R,3R)-2,3-dihydroxy-3-methylpentanoate (2,3-dihydroxy-3-methylvalerate) into 2-oxo-3-methylpentanoate (2-oxo-3-methylvalerate) and of (2R)-2,3-dihydroxy-3-methylbutanoate (2,3-dihydroxyisovalerate) into 2-oxo-3-methylbutanoate (2-oxoisovalerate), the penultimate precursor to L-isoleucine and L-valine, respectively. The protein is Dihydroxy-acid dehydratase of Methanobrevibacter smithii (strain ATCC 35061 / DSM 861 / OCM 144 / PS).